The following is a 464-amino-acid chain: Trigger factor (464 aa).

Positions 169–256 constitute a PPIase FKBP-type domain; it reads GDVAIVDYRG…MKELKAKELP (88 aa).

It belongs to the FKBP-type PPIase family. Tig subfamily.

The protein resides in the cytoplasm. The catalysed reaction is [protein]-peptidylproline (omega=180) = [protein]-peptidylproline (omega=0). Functionally, involved in protein export. Acts as a chaperone by maintaining the newly synthesized protein in an open conformation. Functions as a peptidyl-prolyl cis-trans isomerase. The chain is Trigger factor from Microcystis aeruginosa (strain NIES-843 / IAM M-2473).